We begin with the raw amino-acid sequence, 301 residues long: 5'-adenylylsulfate reductase-like 5 (301 aa).

The first 21 residues, 1–21 (MTRCAVVAAVAAVLLVAGAAA), serve as a signal peptide directing secretion. Residues 51 to 164 (CIRIEPSPPV…LVDFYKETTG (114 aa)) enclose the Thioredoxin domain. N139 carries an N-linked (GlcNAc...) asparagine glycan. Residues 201–221 (FVLLAVLFIILKVAAHFVPIV) traverse the membrane as a helical segment. N268 carries N-linked (GlcNAc...) asparagine glycosylation.

Its subcellular location is the membrane. The polypeptide is 5'-adenylylsulfate reductase-like 5 (APRL5) (Oryza sativa subsp. japonica (Rice)).